The sequence spans 669 residues: Probable ferric reductase transmembrane component (669 aa).

The segment at 17–86 (FKTNGTEYAK…SGKGNSGTST (70 aa)) is disordered. Residues N20, N52, N64, and N116 are each glycosylated (N-linked (GlcNAc...) asparagine). A compositionally biased stretch (low complexity) spans 28-86 (TTKSSSGSKTSTSASKSSKSTGSSNASKSSTNAHGSNSSTSSTSSSSSKSGKGNSGTST). A helical transmembrane segment spans residues 122–142 (GSGLLGYWAGILAIAIFANMI). Residue N152 is glycosylated (N-linked (GlcNAc...) asparagine). The next 5 helical transmembrane spans lie at 198 to 218 (IIVV…IHHV), 234 to 254 (LIAD…ILFG), 281 to 301 (VDVL…KATG), 313 to 333 (IWGT…MLFF), and 340 to 360 (VFFL…YYHL). Residues 239-373 (TGILGTFLIP…GYGDFMWAAI (135 aa)) enclose the Ferric oxidoreductase domain. The 119-residue stretch at 374–492 (AVWAFDRVVR…EGPYGEPSSA (119 aa)) folds into the FAD-binding FR-type domain. 437 to 442 (HPFTFT) serves as a coordination point for FAD. The helical transmembrane segment at 499–519 (VVFVAGGNGIPGIYSECVDLA) threads the bilayer. N524 and N653 each carry an N-linked (GlcNAc...) asparagine glycan.

Belongs to the ferric reductase (FRE) family. It depends on FAD as a cofactor.

It localises to the membrane. The enzyme catalyses 2 a Fe(II)-siderophore + NAD(+) + H(+) = 2 a Fe(III)-siderophore + NADH. This is Probable ferric reductase transmembrane component (CFL1) from Candida albicans (Yeast).